The following is a 159-amino-acid chain: Single-stranded DNA-binding protein 2 (159 aa).

The SSB domain maps to 2–104; the sequence is MNRVVLVGRL…VVAESVQFLE (103 aa). Positions 106–159 are disordered; sequence RNHAEGATSNNYQNEANYSNNNKTSSYRADTSQKSDSFANEGKPIDINPDDLPF. Residues 114–127 show a composition bias toward low complexity; the sequence is SNNYQNEANYSNNN. Residues 128–143 show a composition bias toward polar residues; sequence KTSSYRADTSQKSDSF.

In terms of assembly, homotetramer.

This Listeria innocua serovar 6a (strain ATCC BAA-680 / CLIP 11262) protein is Single-stranded DNA-binding protein 2 (ssb2).